Here is a 550-residue protein sequence, read N- to C-terminus: Hydroxylamine reductase (550 aa).

Cys3, Cys6, Cys18, and Cys25 together coordinate [2Fe-2S] cluster. 8 residues coordinate hybrid [4Fe-2O-2S] cluster: His249, Glu273, Cys317, Cys405, Cys433, Cys458, Glu492, and Lys494. The residue at position 405 (Cys405) is a Cysteine persulfide.

This sequence belongs to the HCP family. The cofactor is [2Fe-2S] cluster. Hybrid [4Fe-2O-2S] cluster serves as cofactor.

It localises to the cytoplasm. It catalyses the reaction A + NH4(+) + H2O = hydroxylamine + AH2 + H(+). Its function is as follows. Catalyzes the reduction of hydroxylamine to form NH(3) and H(2)O. This Salmonella paratyphi A (strain ATCC 9150 / SARB42) protein is Hydroxylamine reductase.